Reading from the N-terminus, the 279-residue chain is uncharacterized protein (279 aa).

Residues 1 to 28 (MGLFGGGNSKSTSNQTTNNENTNIATQG) form a disordered region. Positions 9–23 (SKSTSNQTTNNENTN) are enriched in low complexity. The helical transmembrane segment at 256–273 (KTLMIGIVAVSAAVGLYA) threads the bilayer.

The protein resides in the host membrane. This is an uncharacterized protein from Pseudoalteromonas espejiana (Bacteriophage PM2).